The chain runs to 261 residues: Imidazole glycerol phosphate synthase subunit HisF (261 aa).

Active-site residues include D16 and D135.

The protein belongs to the HisA/HisF family. In terms of assembly, heterodimer of HisH and HisF.

It localises to the cytoplasm. It carries out the reaction 5-[(5-phospho-1-deoxy-D-ribulos-1-ylimino)methylamino]-1-(5-phospho-beta-D-ribosyl)imidazole-4-carboxamide + L-glutamine = D-erythro-1-(imidazol-4-yl)glycerol 3-phosphate + 5-amino-1-(5-phospho-beta-D-ribosyl)imidazole-4-carboxamide + L-glutamate + H(+). The protein operates within amino-acid biosynthesis; L-histidine biosynthesis; L-histidine from 5-phospho-alpha-D-ribose 1-diphosphate: step 5/9. IGPS catalyzes the conversion of PRFAR and glutamine to IGP, AICAR and glutamate. The HisF subunit catalyzes the cyclization activity that produces IGP and AICAR from PRFAR using the ammonia provided by the HisH subunit. This Mycobacterium ulcerans (strain Agy99) protein is Imidazole glycerol phosphate synthase subunit HisF.